Consider the following 180-residue polypeptide: Pro-glucagon (180 aa).

Residues 1 to 20 (MKTVYIVAGLFVMLVQGSWQ) form the signal peptide. The disordered stretch occupies residues 23 to 59 (PQDTEENARSFPASQTEPLEDPDQINEDKRHSQGTFT). Residue Ser-54 is modified to Phosphoserine. Residues 84–89 (NRNNIA) constitute a propeptide that is removed on maturation. Residues Ser-105 and Ser-108 each carry the phosphoserine modification. Arg-127 is subject to Arginine amide. Positions 131 to 145 (DFPEEVAIAEELGRR) are excised as a propeptide. Phosphoserine occurs at positions 150 and 152.

It belongs to the glucagon family. In terms of processing, proglucagon is post-translationally processed in a tissue-specific manner in pancreatic A cells and intestinal L cells. In pancreatic A cells, the major bioactive hormone is glucagon cleaved by PCSK2/PC2. In the intestinal L cells PCSK1/PC1 liberates GLP-1, GLP-2, glicentin and oxyntomodulin. GLP-1 is further N-terminally truncated by post-translational processing in the intestinal L cells resulting in GLP-1(7-37) GLP-1-(7-36)amide. The C-terminal amidation is neither important for the metabolism of GLP-1 nor for its effects on the endocrine pancreas. In terms of tissue distribution, glucagon is secreted in the A cells of the islets of Langerhans. GLP-1, GLP-2, oxyntomodulin and glicentin are secreted from enteroendocrine cells throughout the gastrointestinal tract.

The protein localises to the secreted. Its function is as follows. Plays a key role in glucose metabolism and homeostasis. Regulates blood glucose by increasing gluconeogenesis and decreasing glycolysis. A counterregulatory hormone of insulin, raises plasma glucose levels in response to insulin-induced hypoglycemia. Plays an important role in initiating and maintaining hyperglycemic conditions in diabetes. Potent stimulator of glucose-dependent insulin release. Also stimulates insulin release in response to IL6. Plays important roles on gastric motility and the suppression of plasma glucagon levels. May be involved in the suppression of satiety and stimulation of glucose disposal in peripheral tissues, independent of the actions of insulin. Has growth-promoting activities on intestinal epithelium. May also regulate the hypothalamic pituitary axis (HPA) via effects on LH, TSH, CRH, oxytocin, and vasopressin secretion. Increases islet mass through stimulation of islet neogenesis and pancreatic beta cell proliferation. Inhibits beta cell apoptosis. In terms of biological role, stimulates intestinal growth and up-regulates villus height in the small intestine, concomitant with increased crypt cell proliferation and decreased enterocyte apoptosis. The gastrointestinal tract, from the stomach to the colon is the principal target for GLP-2 action. Plays a key role in nutrient homeostasis, enhancing nutrient assimilation through enhanced gastrointestinal function, as well as increasing nutrient disposal. Stimulates intestinal glucose transport and decreases mucosal permeability. Functionally, may modulate gastric acid secretion and the gastro-pyloro-duodenal activity. May play an important role in intestinal mucosal growth in the early period of life. Its function is as follows. Oxyntomodulin significantly reduces food intake. This is Pro-glucagon (Gcg) from Rattus norvegicus (Rat).